Here is a 189-residue protein sequence, read N- to C-terminus: Elongation factor P (189 aa).

Lys34 carries the N6-(3,6-diaminohexanoyl)-5-hydroxylysine modification.

This sequence belongs to the elongation factor P family. In terms of processing, may be beta-lysylated on the epsilon-amino group of Lys-34 by the combined action of EpmA and EpmB, and then hydroxylated on the C5 position of the same residue by EpmC (if this protein is present). Lysylation is critical for the stimulatory effect of EF-P on peptide-bond formation. The lysylation moiety may extend toward the peptidyltransferase center and stabilize the terminal 3-CCA end of the tRNA. Hydroxylation of the C5 position on Lys-34 may allow additional potential stabilizing hydrogen-bond interactions with the P-tRNA.

It localises to the cytoplasm. It functions in the pathway protein biosynthesis; polypeptide chain elongation. In terms of biological role, involved in peptide bond synthesis. Alleviates ribosome stalling that occurs when 3 or more consecutive Pro residues or the sequence PPG is present in a protein, possibly by augmenting the peptidyl transferase activity of the ribosome. Modification of Lys-34 is required for alleviation. This is Elongation factor P from Halorhodospira halophila (strain DSM 244 / SL1) (Ectothiorhodospira halophila (strain DSM 244 / SL1)).